We begin with the raw amino-acid sequence, 660 residues long: Bifunctional polymyxin resistance protein ArnA (660 aa).

The interval 1–304 (MKTVVFAYHD…TLGLVQGSRL (304 aa)) is formyltransferase ArnAFT. Residue 86–88 (HLI) coordinates (6R)-10-formyltetrahydrofolate. His104 serves as the catalytic Proton donor; for formyltransferase activity. Residues Arg114 and 136–140 (VKRAD) contribute to the (6R)-10-formyltetrahydrofolate site. The interval 314-660 (RRTRVLILGV…RTVDLTDKPS (347 aa)) is dehydrogenase ArnADH. Residues Asp347 and 368–369 (DI) each bind NAD(+). Residues Ala393, Tyr398, and 432-433 (TS) each bind UDP-alpha-D-glucuronate. Catalysis depends on Glu434, which acts as the Proton acceptor; for decarboxylase activity. Residues Arg460, Asn492, 526 to 535 (KLIDGGKQKR), and Tyr613 each bind UDP-alpha-D-glucuronate. The Proton donor; for decarboxylase activity role is filled by Arg619.

It in the N-terminal section; belongs to the Fmt family. UDP-L-Ara4N formyltransferase subfamily. In the C-terminal section; belongs to the NAD(P)-dependent epimerase/dehydratase family. UDP-glucuronic acid decarboxylase subfamily. As to quaternary structure, homohexamer, formed by a dimer of trimers.

The enzyme catalyses UDP-alpha-D-glucuronate + NAD(+) = UDP-beta-L-threo-pentopyranos-4-ulose + CO2 + NADH. It carries out the reaction UDP-4-amino-4-deoxy-beta-L-arabinose + (6R)-10-formyltetrahydrofolate = UDP-4-deoxy-4-formamido-beta-L-arabinose + (6S)-5,6,7,8-tetrahydrofolate + H(+). It functions in the pathway nucleotide-sugar biosynthesis; UDP-4-deoxy-4-formamido-beta-L-arabinose biosynthesis; UDP-4-deoxy-4-formamido-beta-L-arabinose from UDP-alpha-D-glucuronate: step 1/3. It participates in nucleotide-sugar biosynthesis; UDP-4-deoxy-4-formamido-beta-L-arabinose biosynthesis; UDP-4-deoxy-4-formamido-beta-L-arabinose from UDP-alpha-D-glucuronate: step 3/3. Its pathway is bacterial outer membrane biogenesis; lipopolysaccharide biosynthesis. Functionally, bifunctional enzyme that catalyzes the oxidative decarboxylation of UDP-glucuronic acid (UDP-GlcUA) to UDP-4-keto-arabinose (UDP-Ara4O) and the addition of a formyl group to UDP-4-amino-4-deoxy-L-arabinose (UDP-L-Ara4N) to form UDP-L-4-formamido-arabinose (UDP-L-Ara4FN). The modified arabinose is attached to lipid A and is required for resistance to polymyxin and cationic antimicrobial peptides. This chain is Bifunctional polymyxin resistance protein ArnA, found in Escherichia coli O6:H1 (strain CFT073 / ATCC 700928 / UPEC).